The primary structure comprises 128 residues: Fluoride-specific ion channel FluC (128 aa).

4 consecutive transmembrane segments (helical) span residues 7–29, 36–57, 65–94, and 98–126; these read LNFIAIGIGATLGAWLRWVLGLR, PWGTLTANLVGGYLIGVMVALI, AWIRLAAVTGFLGGLTTFSTFSAETVDMLE, and YATAAAYAGASLAGSLAMTGLGLATVRLL. Position 43 (Asn43) interacts with fluoride. Na(+) contacts are provided by Gly77 and Thr80. Fluoride contacts are provided by Tyr104, Ser108, and Ser112.

This sequence belongs to the fluoride channel Fluc/FEX (TC 1.A.43) family. As to quaternary structure, homodimer.

The protein localises to the cell inner membrane. The catalysed reaction is fluoride(in) = fluoride(out). Its activity is regulated as follows. Na(+) is not transported, but it plays an essential structural role and its presence is essential for fluoride channel function. The Na(+)-binding site is specific for Na(+) over most other cations including K(+) and Mg(2+). Fluoride efflux is inhibited by Li(2+). In terms of biological role, fluoride-specific ion channel. Important for reducing fluoride concentration in the cell, thus reducing its toxicity. Is highly specific for fluoride ions and cannot transport chloride ions. In Bordetella pertussis (strain Tohama I / ATCC BAA-589 / NCTC 13251), this protein is Fluoride-specific ion channel FluC.